The chain runs to 202 residues: Large ribosomal subunit protein uL4 (202 aa).

The span at Gly42 to Val52 shows a compositional bias: polar residues. The segment at Gly42–Gly70 is disordered.

The protein belongs to the universal ribosomal protein uL4 family. As to quaternary structure, part of the 50S ribosomal subunit.

Its function is as follows. One of the primary rRNA binding proteins, this protein initially binds near the 5'-end of the 23S rRNA. It is important during the early stages of 50S assembly. It makes multiple contacts with different domains of the 23S rRNA in the assembled 50S subunit and ribosome. Functionally, forms part of the polypeptide exit tunnel. The chain is Large ribosomal subunit protein uL4 from Xylella fastidiosa (strain 9a5c).